The primary structure comprises 239 residues: MPEFELYVEDRQVVTPGELLARGQVIASEGTYTSGDEVYSKVTGLVDIDGRRIRVIPLAGPYRPSPGDFVVGIVEEVKFSSWLIDVRAPLPAILHVSNALEEEVDLIETDLSRYYRPGDVITAVVREVDPVQRVELSLLEDDAPTRLGRLQGGQVVEIDPVKVPRVIGRKGSMIKMLKRVLGCDIVVGANGRIYVRAREEPKKERELLAVRAIREIERRSHLRGLTDWLKANLKRLSRW.

The S1 motif domain maps to 67 to 139 (GDFVVGIVEE…PVQRVELSLL (73 aa)). One can recognise a KH domain in the interval 151–217 (QGGQVVEIDP…LAVRAIREIE (67 aa)).

The protein belongs to the RRP4 family. As to quaternary structure, component of the archaeal exosome complex. Forms a trimer of Rrp4 and/or Csl4 subunits. The trimer associates with a hexameric ring-like arrangement composed of 3 Rrp41-Rrp42 heterodimers.

Its subcellular location is the cytoplasm. Its function is as follows. Non-catalytic component of the exosome, which is a complex involved in RNA degradation. Increases the RNA binding and the efficiency of RNA degradation. Confers strong poly(A) specificity to the exosome. This chain is Exosome complex component Rrp4, found in Methanopyrus kandleri (strain AV19 / DSM 6324 / JCM 9639 / NBRC 100938).